The primary structure comprises 24 residues: Myotoxin TmC4-47.2 (24 aa).

Residues 1–24 are disordered; sequence KASSSAPKGWTHHGSRFTFHRGSM. Residues 10-24 are compositionally biased toward basic residues; the sequence is WTHHGSRFTFHRGSM. A C-type lectin domain is found at 13 to 24; that stretch reads HGSRFTFHRGSM.

Expressed by the venom gland.

It is found in the secreted. In terms of biological role, able to depolarize frog skeletal muscle fibers, but has no effects on squid giant axons. Tetrodotoxin is able to partially antagonize the depolarization. Induces myonecrosis. The sequence is that of Myotoxin TmC4-47.2 from Thalassophryne maculosa (Cano toadfish).